The chain runs to 123 residues: MKSIGRQDRVAGRIQQELSALIQKRINDPRLEWATITGVKMTKDLKIARVYYCVFGEEEKKIKVGEAFQQAHGFIKRELAKKLGLRYMPELEFFFDESFDYGRKIESILREIGPLDSPEEPEE.

The protein belongs to the RbfA family. Monomer. Binds 30S ribosomal subunits, but not 50S ribosomal subunits or 70S ribosomes.

It is found in the cytoplasm. In terms of biological role, one of several proteins that assist in the late maturation steps of the functional core of the 30S ribosomal subunit. Associates with free 30S ribosomal subunits (but not with 30S subunits that are part of 70S ribosomes or polysomes). Required for efficient processing of 16S rRNA. May interact with the 5'-terminal helix region of 16S rRNA. The protein is Ribosome-binding factor A of Desulfatibacillum aliphaticivorans.